We begin with the raw amino-acid sequence, 306 residues long: Homoserine O-acetyltransferase (306 aa).

C142 functions as the Acyl-thioester intermediate in the catalytic mechanism. Positions 163 and 192 each coordinate substrate. H235 functions as the Proton acceptor in the catalytic mechanism. Residue E237 is part of the active site. R249 is a substrate binding site.

Belongs to the MetA family.

The protein localises to the cytoplasm. It catalyses the reaction L-homoserine + acetyl-CoA = O-acetyl-L-homoserine + CoA. Its pathway is amino-acid biosynthesis; L-methionine biosynthesis via de novo pathway; O-acetyl-L-homoserine from L-homoserine: step 1/1. Functionally, transfers an acetyl group from acetyl-CoA to L-homoserine, forming acetyl-L-homoserine. In Clostridium botulinum (strain Eklund 17B / Type B), this protein is Homoserine O-acetyltransferase.